The following is a 176-amino-acid chain: Xanthine-guanine phosphoribosyltransferase (176 aa).

5-phospho-alpha-D-ribose 1-diphosphate-binding positions include R51–G52, R88, and D111–T119. R88 contributes to the GMP binding site. Mg(2+) is bound at residue D112. Guanine contacts are provided by D115 and I158. Positions 115 and 158 each coordinate xanthine. Residues D115 to T119 and W157 to I158 contribute to the GMP site.

This sequence belongs to the purine/pyrimidine phosphoribosyltransferase family. XGPT subfamily. In terms of assembly, homotetramer. Mg(2+) is required as a cofactor.

Its subcellular location is the cell inner membrane. It carries out the reaction GMP + diphosphate = guanine + 5-phospho-alpha-D-ribose 1-diphosphate. The catalysed reaction is XMP + diphosphate = xanthine + 5-phospho-alpha-D-ribose 1-diphosphate. The enzyme catalyses IMP + diphosphate = hypoxanthine + 5-phospho-alpha-D-ribose 1-diphosphate. Its pathway is purine metabolism; GMP biosynthesis via salvage pathway; GMP from guanine: step 1/1. The protein operates within purine metabolism; XMP biosynthesis via salvage pathway; XMP from xanthine: step 1/1. In terms of biological role, purine salvage pathway enzyme that catalyzes the transfer of the ribosyl-5-phosphate group from 5-phospho-alpha-D-ribose 1-diphosphate (PRPP) to the N9 position of the 6-oxopurines guanine and xanthine to form the corresponding ribonucleotides GMP (guanosine 5'-monophosphate) and XMP (xanthosine 5'-monophosphate), with the release of PPi. To a lesser extent, also acts on hypoxanthine. The sequence is that of Xanthine-guanine phosphoribosyltransferase from Roseobacter denitrificans (strain ATCC 33942 / OCh 114) (Erythrobacter sp. (strain OCh 114)).